The primary structure comprises 437 residues: ATP-dependent protease ATPase subunit HslU (437 aa).

Residues Val18, 60–65 (GVGKTE), Asp250, Glu315, and Arg387 contribute to the ATP site.

It belongs to the ClpX chaperone family. HslU subfamily. In terms of assembly, a double ring-shaped homohexamer of HslV is capped on each side by a ring-shaped HslU homohexamer. The assembly of the HslU/HslV complex is dependent on binding of ATP.

The protein localises to the cytoplasm. Functionally, ATPase subunit of a proteasome-like degradation complex; this subunit has chaperone activity. The binding of ATP and its subsequent hydrolysis by HslU are essential for unfolding of protein substrates subsequently hydrolyzed by HslV. HslU recognizes the N-terminal part of its protein substrates and unfolds these before they are guided to HslV for hydrolysis. The sequence is that of ATP-dependent protease ATPase subunit HslU from Desulfovibrio desulfuricans (strain ATCC 27774 / DSM 6949 / MB).